We begin with the raw amino-acid sequence, 242 residues long: Ubiquinone biosynthesis O-methyltransferase (242 aa).

Residues Arg44, Gly64, Asp85, and Met129 each coordinate S-adenosyl-L-methionine.

It belongs to the methyltransferase superfamily. UbiG/COQ3 family.

It catalyses the reaction a 3-demethylubiquinol + S-adenosyl-L-methionine = a ubiquinol + S-adenosyl-L-homocysteine + H(+). The catalysed reaction is a 3-(all-trans-polyprenyl)benzene-1,2-diol + S-adenosyl-L-methionine = a 2-methoxy-6-(all-trans-polyprenyl)phenol + S-adenosyl-L-homocysteine + H(+). It functions in the pathway cofactor biosynthesis; ubiquinone biosynthesis. Its function is as follows. O-methyltransferase that catalyzes the 2 O-methylation steps in the ubiquinone biosynthetic pathway. This chain is Ubiquinone biosynthesis O-methyltransferase, found in Yersinia pseudotuberculosis serotype O:1b (strain IP 31758).